The chain runs to 359 residues: Phospho-N-acetylmuramoyl-pentapeptide-transferase (359 aa).

The next 10 helical transmembrane spans lie at glutamine 3–isoleucine 23, glycine 53–isoleucine 73, glycine 84–isoleucine 104, threonine 117–phenylalanine 137, isoleucine 156–alanine 176, leucine 187–phenylalanine 207, leucine 231–alanine 251, isoleucine 255–threonine 275, valine 283–phenylalanine 303, and valine 330–tyrosine 350.

It belongs to the glycosyltransferase 4 family. MraY subfamily. It depends on Mg(2+) as a cofactor.

It is found in the cell membrane. The enzyme catalyses UDP-N-acetyl-alpha-D-muramoyl-L-alanyl-gamma-D-glutamyl-meso-2,6-diaminopimeloyl-D-alanyl-D-alanine + di-trans,octa-cis-undecaprenyl phosphate = di-trans,octa-cis-undecaprenyl diphospho-N-acetyl-alpha-D-muramoyl-L-alanyl-D-glutamyl-meso-2,6-diaminopimeloyl-D-alanyl-D-alanine + UMP. It participates in cell wall biogenesis; peptidoglycan biosynthesis. Its function is as follows. Catalyzes the initial step of the lipid cycle reactions in the biosynthesis of the cell wall peptidoglycan: transfers peptidoglycan precursor phospho-MurNAc-pentapeptide from UDP-MurNAc-pentapeptide onto the lipid carrier undecaprenyl phosphate, yielding undecaprenyl-pyrophosphoryl-MurNAc-pentapeptide, known as lipid I. The sequence is that of Phospho-N-acetylmuramoyl-pentapeptide-transferase from Rhodococcus opacus (strain B4).